A 75-amino-acid polypeptide reads, in one-letter code: Small ribosomal subunit protein bS18 (75 aa).

This sequence belongs to the bacterial ribosomal protein bS18 family. In terms of assembly, part of the 30S ribosomal subunit. Forms a tight heterodimer with protein bS6.

Its function is as follows. Binds as a heterodimer with protein bS6 to the central domain of the 16S rRNA, where it helps stabilize the platform of the 30S subunit. The chain is Small ribosomal subunit protein bS18 from Chromobacterium violaceum (strain ATCC 12472 / DSM 30191 / JCM 1249 / CCUG 213 / NBRC 12614 / NCIMB 9131 / NCTC 9757 / MK).